Consider the following 396-residue polypeptide: Trypacidin cluster transcription factor (396 aa).

A DNA-binding region (zn(2)-C6 fungal-type) is located at residues 20–47; that stretch reads CRACGLSKVRCSKEKPTCSRCRRRGTVC. Disordered stretches follow at residues 54 to 120, 190 to 218, and 346 to 365; these read RPGR…LSTV, DPAP…ESEA, and MHGA…PAPL. Basic and acidic residues predominate over residues 57–71; sequence RKPDSRSEVEPEPGH. A compositionally biased stretch (low complexity) spans 72-82; it reads LSHPLPSPESS.

As to expression, specifically expressed in conidia.

It is found in the nucleus. Its function is as follows. Transcription factor that regulates the expression of the gene clusters that mediate the biosynthesis of trypacidin, a metabolite with antiprotozoal activity and a possible role in the infection process. Trypacidin is toxic for human pulmonary and bronchial epithelial cells by initiating the intracellular formation of nitric oxide (NO) and hydrogen peroxide (H(2)O(2)), thus triggering host necrotic cell death. This is Trypacidin cluster transcription factor from Aspergillus fumigatus (strain ATCC MYA-4609 / CBS 101355 / FGSC A1100 / Af293) (Neosartorya fumigata).